The primary structure comprises 715 residues: Polyribonucleotide nucleotidyltransferase (715 aa).

Mg(2+)-binding residues include Asp498 and Asp504. Residues 565 to 625 form the KH domain; that stretch reads PKVCMMQIKP…ETVKKTVAFI (61 aa). The S1 motif domain maps to 635-706; that stretch reads GTCYQASILR…DRGRIDFLLL (72 aa).

The protein belongs to the polyribonucleotide nucleotidyltransferase family. Mg(2+) is required as a cofactor.

It localises to the cytoplasm. It carries out the reaction RNA(n+1) + phosphate = RNA(n) + a ribonucleoside 5'-diphosphate. In terms of biological role, involved in mRNA degradation. Catalyzes the phosphorolysis of single-stranded polyribonucleotides processively in the 3'- to 5'-direction. The chain is Polyribonucleotide nucleotidyltransferase from Onion yellows phytoplasma (strain OY-M).